A 236-amino-acid chain; its full sequence is MKFGVIVFPGSNCDQDVHYALGSVLGQNVDYLWHGDTSVSGYDCLILPGGFSYGDYLRAGAIARFAPIMPAVIDFARSGGLVLGICNGFQILLEAGLLPGAMMRNACLQFRCQWTCLKVDNNATPFTNRFREGQVVRIPIAHGEGNYYADAATLAQLEANRQIIFRYCSPDGEVTPAANPNGSVGNIAGIINREGNVLGMMPHPERCAEGILGGSDGRELLASIVDWWERGERLGA.

The region spanning 3-234 (FGVIVFPGSN…VDWWERGERL (232 aa)) is the Glutamine amidotransferase type-1 domain. The active-site Nucleophile is Cys86. Catalysis depends on residues His203 and Glu205.

As to quaternary structure, part of the FGAM synthase complex composed of 1 PurL, 1 PurQ and 2 PurS subunits.

The protein localises to the cytoplasm. It carries out the reaction N(2)-formyl-N(1)-(5-phospho-beta-D-ribosyl)glycinamide + L-glutamine + ATP + H2O = 2-formamido-N(1)-(5-O-phospho-beta-D-ribosyl)acetamidine + L-glutamate + ADP + phosphate + H(+). The catalysed reaction is L-glutamine + H2O = L-glutamate + NH4(+). It functions in the pathway purine metabolism; IMP biosynthesis via de novo pathway; 5-amino-1-(5-phospho-D-ribosyl)imidazole from N(2)-formyl-N(1)-(5-phospho-D-ribosyl)glycinamide: step 1/2. Its function is as follows. Part of the phosphoribosylformylglycinamidine synthase complex involved in the purines biosynthetic pathway. Catalyzes the ATP-dependent conversion of formylglycinamide ribonucleotide (FGAR) and glutamine to yield formylglycinamidine ribonucleotide (FGAM) and glutamate. The FGAM synthase complex is composed of three subunits. PurQ produces an ammonia molecule by converting glutamine to glutamate. PurL transfers the ammonia molecule to FGAR to form FGAM in an ATP-dependent manner. PurS interacts with PurQ and PurL and is thought to assist in the transfer of the ammonia molecule from PurQ to PurL. The protein is Phosphoribosylformylglycinamidine synthase subunit PurQ of Moorella thermoacetica (strain ATCC 39073 / JCM 9320).